A 152-amino-acid polypeptide reads, in one-letter code: Spermine/spermidine N(1)-acetyltransferase (152 aa).

One can recognise an N-acetyltransferase domain in the interval 3–152 (INIKAVTDDN…NGEKVMVKEL (150 aa)). Acetyl-CoA-binding positions include 82 to 84 (FFI), 89 to 95 (QGKGLGK), and 122 to 131 (NIHAIRLYQR). Catalysis depends on tyrosine 129, which acts as the Proton donor.

It belongs to the acetyltransferase family.

The catalysed reaction is an alkane-alpha,omega-diamine + acetyl-CoA = an N-acetylalkane-alpha,omega-diamine + CoA + H(+). It carries out the reaction spermine + acetyl-CoA = N(1)-acetylspermine + CoA + H(+). It catalyses the reaction spermidine + acetyl-CoA = N(1)-acetylspermidine + CoA + H(+). Its pathway is amine and polyamine degradation; spermine degradation. The protein operates within amine and polyamine degradation; spermidine degradation. Its activity is regulated as follows. Putrescine and N(8)-acetylspermidine are competitive inhibitors of spermidine acetylation. Functionally, acetylates both spermidine and spermine at primary propyl amine moieties, with spermine being the preferred substrate. This Bacillus subtilis (strain 168) protein is Spermine/spermidine N(1)-acetyltransferase (bltD).